Here is a 425-residue protein sequence, read N- to C-terminus: Podosporapepsin (425 aa).

The first 28 residues, 1–28, serve as a signal peptide directing secretion; the sequence is MVSLTDLFLASLLVPTSPWLCLPPRIDT. The propeptide at 29-91 is activation peptide; that stretch reads IDQRGGRVTL…QEEAFARIKR (63 aa). A Peptidase A1 domain is found at 108 to 419; that stretch reads YVTPVTIGTP…GTNPPRIGFA (312 aa). The active site involves Asp126. N-linked (GlcNAc...) asparagine glycans are attached at residues Asn184 and Asn273. The active site involves Asp310. A disulfide bond links Cys346 and Cys381. Residue Asn370 is glycosylated (N-linked (GlcNAc...) asparagine).

This sequence belongs to the peptidase A1 family.

The sequence is that of Podosporapepsin (PAPA) from Podospora anserina (Pleurage anserina).